The following is a 1302-amino-acid chain: Multidrug resistance protein 1 (1302 aa).

Residues 43–63 (GVFEIILLIIGIIGSIGVGCL) traverse the membrane as a helical segment. Residues 51–360 (IIGIIGSIGV…ISTPINILNS (310 aa)) enclose the ABC transmembrane type-1 1 domain. An N-linked (GlcNAc...) asparagine glycan is attached at Asn83. Helical transmembrane passes span 118-138 (LYFA…FFVL), 192-212 (LFQT…KCWD), 213-233 (LTLV…GLGM), 292-312 (IGIG…NALG), and 331-351 (AGTV…LSQI). One can recognise an ABC transporter 1 domain in the interval 395-634 (IRFEDVQFVY…KGTYYGLVKR (240 aa)). 430–437 (GASGCGKS) contacts ATP. Asn663 carries N-linked (GlcNAc...) asparagine glycosylation. A helical transmembrane segment spans residues 712–732 (YIFCTLGLIGGIGAGAAFPFY). In terms of domain architecture, ABC transmembrane type-1 2 spans 713–1022 (IFCTLGLIGG…IGNVLPDVGK (310 aa)). Asn751 carries an N-linked (GlcNAc...) asparagine glycan. A helical transmembrane segment spans residues 765–785 (MIIICIGIITMISFFCYVGLF). A glycan (N-linked (GlcNAc...) asparagine) is linked at Asn808. 2 helical membrane-spanning segments follow: residues 841-861 (VGDI…GLYF) and 862-882 (SWKL…FMFI). The 240-residue stretch at 1057–1296 (IEFKNIHFRY…KGFYYTLAMQ (240 aa)) folds into the ABC transporter 2 domain. 1092-1099 (GASGCGKS) serves as a coordination point for ATP.

Belongs to the ABC transporter superfamily. ABCB family. Multidrug resistance exporter (TC 3.A.1.201) subfamily.

The protein localises to the membrane. It catalyses the reaction ATP + H2O + xenobioticSide 1 = ADP + phosphate + xenobioticSide 2.. Energy-dependent efflux pump responsible for decreased drug accumulation in multidrug resistance parasites. The chain is Multidrug resistance protein 1 from Entamoeba histolytica (strain ATCC 30459 / HM-1:IMSS / ABRM).